Here is a 376-residue protein sequence, read N- to C-terminus: Actin (376 aa).

The protein belongs to the actin family.

It is found in the cytoplasm. The protein resides in the cytoskeleton. The enzyme catalyses ATP + H2O = ADP + phosphate + H(+). Actins are highly conserved proteins that are involved in various types of cell motility and are ubiquitously expressed in all eukaryotic cells. In Trypanosoma cruzi, this protein is Actin.